The chain runs to 105 residues: Malonate decarboxylase acyl carrier protein (105 aa).

S28 is subject to O-(phosphoribosyl dephospho-coenzyme A)serine.

This sequence belongs to the MdcC family. Covalently binds the prosthetic group of malonate decarboxylase.

The protein localises to the cytoplasm. In terms of biological role, subunit of malonate decarboxylase, it is an acyl carrier protein to which acetyl and malonyl thioester residues are bound via a 2'-(5''-phosphoribosyl)-3'-dephospho-CoA prosthetic group and turn over during the catalytic mechanism. In Bradyrhizobium diazoefficiens (strain JCM 10833 / BCRC 13528 / IAM 13628 / NBRC 14792 / USDA 110), this protein is Malonate decarboxylase acyl carrier protein.